Reading from the N-terminus, the 784-residue chain is ATP-dependent 6-phosphofructokinase, platelet type (784 aa).

Met-1 is modified (N-acetylmethionine). Residues 1–399 (MDADDSRAPK…NLNTYKRLAI (399 aa)) form an N-terminal catalytic PFK domain 1 region. A phosphoserine mark is found at Ser-6, Ser-12, and Ser-21. ATP contacts are provided by residues Gly-34, 97–98 (RC), and 127–130 (GDGS). A Mg(2+)-binding site is contributed by Asp-128. Ser-142 bears the Phosphoserine mark. Substrate contacts are provided by residues 173–175 (SID), Arg-210, 217–219 (MGR), Glu-273, Arg-301, and 307–310 (HVQR). The active-site Proton acceptor is Asp-175. Ser-386 carries the phosphoserine modification. N6-acetyllysine is present on Lys-395. Residues 400 to 411 (KLPDDQIPKTNC) are interdomain linker. Residues 412-784 (NVAVINVGAP…QLEHVQPWSV (373 aa)) are C-terminal regulatory PFK domain 2. Arg-481 provides a ligand contact to beta-D-fructose 2,6-bisphosphate. The residue at position 486 (Lys-486) is an N6-acetyllysine. Beta-D-fructose 2,6-bisphosphate contacts are provided by residues 538–542 (TVSNN), Arg-576, 583–585 (MGG), and Glu-639. O-linked (GlcNAc) serine glycosylation occurs at Ser-540. Tyr-651 is modified (phosphotyrosine). Residues Arg-665 and 671-674 (HMQQ) each bind beta-D-fructose 2,6-bisphosphate. Lys-688 is subject to N6-acetyllysine. Residue Arg-744 coordinates beta-D-fructose 2,6-bisphosphate. Residue Ser-783 is modified to Phosphoserine.

The protein belongs to the phosphofructokinase type A (PFKA) family. ATP-dependent PFK group I subfamily. Eukaryotic two domain clade 'E' sub-subfamily. As to quaternary structure, homo- and heterotetramers. Phosphofructokinase (PFK) enzyme functions as a tetramer composed of different combinations of 3 types of subunits, called PFKM (M), PFKL (L) and PFKP (P). The composition of the PFK tetramer differs according to the tissue type it is present in. The kinetic and regulatory properties of the tetrameric enzyme are dependent on the subunit composition, hence can vary across tissues. Interacts with ATG4B; promoting phosphorylation of ATG4B. Mg(2+) serves as cofactor. GlcNAcylation decreases enzyme activity. Post-translationally, phosphorylation at Ser-386 promotes interaction with ATG4B.

It is found in the cytoplasm. It catalyses the reaction beta-D-fructose 6-phosphate + ATP = beta-D-fructose 1,6-bisphosphate + ADP + H(+). The protein operates within carbohydrate degradation; glycolysis; D-glyceraldehyde 3-phosphate and glycerone phosphate from D-glucose: step 3/4. Allosterically activated by ADP, AMP, or fructose 2,6-bisphosphate, and allosterically inhibited by ATP or citrate. Functionally, catalyzes the phosphorylation of D-fructose 6-phosphate to fructose 1,6-bisphosphate by ATP, the first committing step of glycolysis. The sequence is that of ATP-dependent 6-phosphofructokinase, platelet type (PFKP) from Pongo abelii (Sumatran orangutan).